We begin with the raw amino-acid sequence, 345 residues long: Arginine-hydroxylase NDUFAF5, mitochondrial (345 aa).

A mitochondrion-targeting transit peptide spans 1–36 (MLRPAGLWRLCRRPWAARVPAENLGRREVTSGVSPR).

The protein belongs to the methyltransferase superfamily. As to quaternary structure, interacts with NDUFAF8, leading to stabilize NDUFAF5. Interacts with NDUFS7. Interacts with PYURF (via TRM112 domain); the interaction is direct and stabilizes NDUFAF5 protein.

It localises to the mitochondrion inner membrane. Arginine hydroxylase that mediates hydroxylation of 'Arg-111' of NDUFS7 and is involved in the assembly of mitochondrial NADH:ubiquinone oxidoreductase complex (complex I, MT-ND1) at early stages. May also have methyltransferase activity. This chain is Arginine-hydroxylase NDUFAF5, mitochondrial, found in Homo sapiens (Human).